We begin with the raw amino-acid sequence, 292 residues long: Polyisoprenoid diphosphate/phosphate phosphohydrolase PLPP6 (292 aa).

2 disordered regions span residues 1 to 34 (MPSP…SGGG) and 66 to 86 (GSFP…PPED). The Cytoplasmic portion of the chain corresponds to 1–131 (MPSPRRTIEG…SAWGSVRPLM (131 aa)). Over residues 10-25 (GRPLGSSGGSSVPGSP) the composition is skewed to low complexity. Serine 24 and serine 67 each carry phosphoserine. A compositionally biased stretch (low complexity) spans 69–79 (PLAASGPAQAA). Residues 132–152 (KLLEISGHGIPWLLGTLYCLL) form a helical membrane-spanning segment. Residues 153-161 (RSDSWAGRE) are Lumenal-facing. A helical membrane pass occupies residues 162-182 (VLMNLLFALLLDLLLVAVIKG). The phosphatase sequence motif I stretch occupies residues 181-189 (KGLVRRRRP). Residues 183–225 (LVRRRRPAHNQKDMFFTLSVDRYSFPSGHATRAALVSRFILNH) are Cytoplasmic-facing. Positions 208-211 (PSGH) are phosphatase sequence motif II. Histidine 211 acts as the Proton donors in catalysis. The helical transmembrane segment at 226–246 (LVLAIPLRVLVVLWAFVLGLS) threads the bilayer. A phosphatase sequence motif III region spans residues 246-257 (SRVMLGRHNVTD). At 247–257 (RVMLGRHNVTD) the chain is on the lumenal side. The Nucleophile role is filled by histidine 253. Residues 258 to 278 (VAFGFFLGYMQYSIVDYCWLS) traverse the membrane as a helical segment. At 279-292 (PHNVPVLFVLWNQQ) the chain is on the cytoplasmic side.

It belongs to the PA-phosphatase related phosphoesterase family. Post-translationally, phosphorylation by PKC activates the phosphatase activity towards presqualene diphosphate.

The protein localises to the endoplasmic reticulum membrane. Its subcellular location is the nucleus envelope. It localises to the nucleus inner membrane. It catalyses the reaction presqualene diphosphate + H2O = presqualene phosphate + phosphate + H(+). The enzyme catalyses presqualene phosphate + H2O = presqualene alcohol + phosphate. It carries out the reaction (2E,6E)-farnesyl diphosphate + H2O = (2E,6E)-farnesyl phosphate + phosphate + H(+). The catalysed reaction is (2E,6E)-farnesyl phosphate + H2O = (2E,6E)-farnesol + phosphate. It catalyses the reaction (2E,6E,10E)-geranylgeranyl diphosphate + H2O = (2E,6E,10E)-geranylgeranyl phosphate + phosphate + H(+). The enzyme catalyses (2E,6E,10E)-geranylgeranyl phosphate + H2O = (2E,6E,10E)-geranylgeraniol + phosphate. It carries out the reaction (2E)-geranyl diphosphate + H2O = (2E)-geranyl phosphate + phosphate + H(+). The catalysed reaction is (2E)-geranyl phosphate + H2O = (2E)-geraniol + phosphate. It catalyses the reaction 1,2-dihexadecanoyl-sn-glycero-3-phosphate + H2O = 1,2-dihexadecanoyl-sn-glycerol + phosphate. Functionally, magnesium-independent polyisoprenoid diphosphatase that catalyzes the sequential dephosphorylation of presqualene, farnesyl, geranyl and geranylgeranyl diphosphates. Functions in the innate immune response through the dephosphorylation of presqualene diphosphate which acts as a potent inhibitor of the signaling pathways contributing to polymorphonuclear neutrophils activation. May regulate the biosynthesis of cholesterol and related sterols by dephosphorylating presqualene and farnesyl diphosphate, two key intermediates in this biosynthetic pathway. May also play a role in protein prenylation by acting on farnesyl diphosphate and its derivative geranylgeranyl diphosphate, two precursors for the addition of isoprenoid anchors to membrane proteins. Has a lower activity towards phosphatidic acid (PA), but through phosphatidic acid dephosphorylation may participate in the biosynthesis of phospholipids and triacylglycerols. May also act on ceramide-1-P, lysophosphatidic acid (LPA) and sphing-4-enine 1-phosphate/sphingosine-1-phosphate. This is Polyisoprenoid diphosphate/phosphate phosphohydrolase PLPP6 from Mus musculus (Mouse).